A 750-amino-acid polypeptide reads, in one-letter code: Photosystem I P700 chlorophyll a apoprotein A1 (750 aa).

Helical transmembrane passes span 70–93, 156–179, 195–219, 291–309, 346–369, 385–411, 433–455, and 531–549; these read VFSA…FHGA, LYCT…FHYH, LNHH…HVSL, IAHH…GHMY, WHAQ…HHMY, LSLF…IFMV, AIIS…LYIH, and FLVH…LILL. Cysteine 573 and cysteine 582 together coordinate [4Fe-4S] cluster. Helical transmembrane passes span 589-610 and 664-686; these read HVFL…HFSW and LSAY…MFLF. Histidine 675 is a binding site for chlorophyll a'. Chlorophyll a-binding residues include methionine 683 and tyrosine 691. A phylloquinone-binding site is contributed by tryptophan 692. The helical transmembrane segment at 724-744 threads the bilayer; sequence AVGVTHYLLGGIATTWAFFLA.

Belongs to the PsaA/PsaB family. The PsaA/B heterodimer binds the P700 chlorophyll special pair and subsequent electron acceptors. PSI consists of a core antenna complex that captures photons, and an electron transfer chain that converts photonic excitation into a charge separation. The eukaryotic PSI reaction center is composed of at least 11 subunits. P700 is a chlorophyll a/chlorophyll a' dimer, A0 is one or more chlorophyll a, A1 is one or both phylloquinones and FX is a shared 4Fe-4S iron-sulfur center. serves as cofactor.

It localises to the plastid. Its subcellular location is the chloroplast thylakoid membrane. The catalysed reaction is reduced [plastocyanin] + hnu + oxidized [2Fe-2S]-[ferredoxin] = oxidized [plastocyanin] + reduced [2Fe-2S]-[ferredoxin]. Functionally, psaA and PsaB bind P700, the primary electron donor of photosystem I (PSI), as well as the electron acceptors A0, A1 and FX. PSI is a plastocyanin-ferredoxin oxidoreductase, converting photonic excitation into a charge separation, which transfers an electron from the donor P700 chlorophyll pair to the spectroscopically characterized acceptors A0, A1, FX, FA and FB in turn. Oxidized P700 is reduced on the lumenal side of the thylakoid membrane by plastocyanin. This chain is Photosystem I P700 chlorophyll a apoprotein A1, found in Phalaenopsis aphrodite subsp. formosana (Moth orchid).